A 258-amino-acid polypeptide reads, in one-letter code: Spindlin-2 (258 aa).

The segment at 1–47 (MKTPHKKATARQQTREIVDDHTLSASMRKKKISQKKQRGRPSSQTRR) is disordered. The segment covering 13-22 (QTREIVDDHT) has biased composition (basic and acidic residues). Basic residues predominate over residues 27-39 (MRKKKISQKKQRG). Tudor-like domain stretches follow at residues 50 to 99 (VGCR…LELH), 129 to 178 (IGKA…YQLL), and 210 to 255 (IGKH…YDLV). 2 histone H3K4me3 and H3R8me2a binding regions span residues E138 and 246–248 (DFH).

It belongs to the SPIN/STSY family. As to quaternary structure, interacts with C11orf84/SPINDOC.

The protein resides in the nucleus. In terms of biological role, may be involved in the regulation of cell cycle progression. Exhibits H3K4me3-binding activity. The polypeptide is Spindlin-2 (SPIN2) (Bos taurus (Bovine)).